The primary structure comprises 870 residues: Aminopeptidase N (870 aa).

Substrate-binding positions include glutamate 121 and 261–265 (GAMEN). Histidine 297 provides a ligand contact to Zn(2+). Catalysis depends on glutamate 298, which acts as the Proton acceptor. 2 residues coordinate Zn(2+): histidine 301 and glutamate 320.

It belongs to the peptidase M1 family. It depends on Zn(2+) as a cofactor.

It is found in the cell inner membrane. It carries out the reaction Release of an N-terminal amino acid, Xaa-|-Yaa- from a peptide, amide or arylamide. Xaa is preferably Ala, but may be most amino acids including Pro (slow action). When a terminal hydrophobic residue is followed by a prolyl residue, the two may be released as an intact Xaa-Pro dipeptide.. Aminopeptidase N is involved in the degradation of intracellular peptides generated by protein breakdown during normal growth as well as in response to nutrient starvation. This chain is Aminopeptidase N (pepN), found in Escherichia coli (strain K12).